A 123-amino-acid chain; its full sequence is Small ribosomal subunit protein uS12 (123 aa).

A disordered region spans residues 1–22 (MATINQLVRQPRKRSVEKSDVP). Aspartate 89 carries the post-translational modification 3-methylthioaspartic acid. The tract at residues 100–123 (GSLDTSGVKGRNQGRSKYGTKRPK) is disordered. The span at 111-123 (NQGRSKYGTKRPK) shows a compositional bias: basic residues.

It belongs to the universal ribosomal protein uS12 family. Part of the 30S ribosomal subunit. Contacts proteins S8 and S17. May interact with IF1 in the 30S initiation complex.

In terms of biological role, with S4 and S5 plays an important role in translational accuracy. Functionally, interacts with and stabilizes bases of the 16S rRNA that are involved in tRNA selection in the A site and with the mRNA backbone. Located at the interface of the 30S and 50S subunits, it traverses the body of the 30S subunit contacting proteins on the other side and probably holding the rRNA structure together. The combined cluster of proteins S8, S12 and S17 appears to hold together the shoulder and platform of the 30S subunit. The polypeptide is Small ribosomal subunit protein uS12 (Pseudomonas entomophila (strain L48)).